We begin with the raw amino-acid sequence, 165 residues long: Endoribonuclease YbeY (165 aa).

Zn(2+) is bound by residues His131, His135, and His141.

Belongs to the endoribonuclease YbeY family. Zn(2+) serves as cofactor.

It localises to the cytoplasm. Single strand-specific metallo-endoribonuclease involved in late-stage 70S ribosome quality control and in maturation of the 3' terminus of the 16S rRNA. This Agathobacter rectalis (strain ATCC 33656 / DSM 3377 / JCM 17463 / KCTC 5835 / VPI 0990) (Eubacterium rectale) protein is Endoribonuclease YbeY.